The primary structure comprises 288 residues: Baseplate protein gp9 (288 aa).

Residues 20-80 (TGDILFDGGN…SITEYATPVK (61 aa)) are a coiled coil.

As to quaternary structure, homotrimer. The gp9 trimer interacts with the long tail fiber (LTF) that comprises gp34 trimer, gp35, gp36 and a gp37 trimer. Part of the baseplate macromolecular complex which consists of gp5, gp5.4, gp27 (central spike complex); gp6, gp25, gp53 (inner baseplate); gp7, gp8 (intermediate baseplate); gp9, gp10, gp11, gp12 (peripheral); gp48 and gp54 (proximal region of the tail tube).

It localises to the virion. In terms of biological role, peripheral baseplate protein that is part of the tail fiber network. Connects the long tail fibers to the baseplate and, after virus attachment to a host cell, probably changes its conformation to trigger the signal for tail contraction. Involved in the tail assembly. The polypeptide is Baseplate protein gp9 (9) (Enterobacteria phage T4 (Bacteriophage T4)).